Consider the following 426-residue polypeptide: Ornithine aminotransferase (426 aa).

Lysine 291 is subject to N6-(pyridoxal phosphate)lysine.

Belongs to the class-III pyridoxal-phosphate-dependent aminotransferase family. Pyridoxal 5'-phosphate is required as a cofactor.

The catalysed reaction is a 2-oxocarboxylate + L-ornithine = L-glutamate 5-semialdehyde + an L-alpha-amino acid. Its pathway is amino-acid biosynthesis; L-proline biosynthesis; L-glutamate 5-semialdehyde from L-ornithine: step 1/1. This Vigna aconitifolia (Moth bean) protein is Ornithine aminotransferase.